The following is a 412-amino-acid chain: CCA-adding enzyme (412 aa).

2 residues coordinate ATP: Ser41 and Lys44. CTP contacts are provided by Ser41 and Lys44. The Mg(2+) site is built by Asp53, Asp55, and Asp106. Residues His129, Lys149, and Tyr158 each coordinate ATP. CTP is bound by residues His129, Lys149, and Tyr158.

This sequence belongs to the tRNA nucleotidyltransferase/poly(A) polymerase family. Archaeal CCA-adding enzyme subfamily. In terms of assembly, homodimer. Mg(2+) serves as cofactor.

It catalyses the reaction a tRNA precursor + 2 CTP + ATP = a tRNA with a 3' CCA end + 3 diphosphate. The catalysed reaction is a tRNA with a 3' CCA end + 2 CTP + ATP = a tRNA with a 3' CCACCA end + 3 diphosphate. Catalyzes the addition and repair of the essential 3'-terminal CCA sequence in tRNAs without using a nucleic acid template. Adds these three nucleotides in the order of C, C, and A to the tRNA nucleotide-73, using CTP and ATP as substrates and producing inorganic pyrophosphate. tRNA 3'-terminal CCA addition is required both for tRNA processing and repair. Also involved in tRNA surveillance by mediating tandem CCA addition to generate a CCACCA at the 3' terminus of unstable tRNAs. While stable tRNAs receive only 3'-terminal CCA, unstable tRNAs are marked with CCACCA and rapidly degraded. This is CCA-adding enzyme from Saccharolobus solfataricus (strain ATCC 35092 / DSM 1617 / JCM 11322 / P2) (Sulfolobus solfataricus).